We begin with the raw amino-acid sequence, 152 residues long: 3-hydroxyacyl-[acyl-carrier-protein] dehydratase FabZ (152 aa).

Residue His57 is part of the active site.

It belongs to the thioester dehydratase family. FabZ subfamily.

Its subcellular location is the cytoplasm. It carries out the reaction a (3R)-hydroxyacyl-[ACP] = a (2E)-enoyl-[ACP] + H2O. Its function is as follows. Involved in unsaturated fatty acids biosynthesis. Catalyzes the dehydration of short chain beta-hydroxyacyl-ACPs and long chain saturated and unsaturated beta-hydroxyacyl-ACPs. In Bradyrhizobium sp. (strain BTAi1 / ATCC BAA-1182), this protein is 3-hydroxyacyl-[acyl-carrier-protein] dehydratase FabZ.